Reading from the N-terminus, the 411-residue chain is ATPase GET3B (411 aa).

The N-terminal 67 residues, 1–67, are a transit peptide targeting the chloroplast; that stretch reads MATLSSYLLS…RRRNSLQVKS (67 aa). 95 to 102 is a binding site for ATP; sequence KGGVGKTS. The active site involves D124. Residue N348 coordinates ATP.

The protein belongs to the arsA ATPase family.

It is found in the plastid. The protein localises to the chloroplast stroma. It carries out the reaction ATP + H2O = ADP + phosphate + H(+). This chain is ATPase GET3B, found in Arabidopsis thaliana (Mouse-ear cress).